A 628-amino-acid chain; its full sequence is Putative ankyrin repeat protein L769 (628 aa).

ANK repeat units lie at residues 217–246 (NYMD…EYDF), 333–362 (DLDE…DINR), 421–451 (TAEN…NHDL), and 512–542 (NNLK…DQDY).

The sequence is that of Putative ankyrin repeat protein L769 from Acanthamoeba polyphaga mimivirus (APMV).